Reading from the N-terminus, the 477-residue chain is 3-isopropylmalate dehydratase large subunit (477 aa).

[4Fe-4S] cluster is bound by residues Cys358, Cys419, and Cys422.

Belongs to the aconitase/IPM isomerase family. LeuC type 1 subfamily. Heterodimer of LeuC and LeuD. The cofactor is [4Fe-4S] cluster.

The enzyme catalyses (2R,3S)-3-isopropylmalate = (2S)-2-isopropylmalate. It functions in the pathway amino-acid biosynthesis; L-leucine biosynthesis; L-leucine from 3-methyl-2-oxobutanoate: step 2/4. In terms of biological role, catalyzes the isomerization between 2-isopropylmalate and 3-isopropylmalate, via the formation of 2-isopropylmaleate. This is 3-isopropylmalate dehydratase large subunit from Acinetobacter baylyi (strain ATCC 33305 / BD413 / ADP1).